Consider the following 243-residue polypeptide: Pyridoxine 5'-phosphate synthase (243 aa).

Position 7 (Asn-7) interacts with 3-amino-2-oxopropyl phosphate. 9 to 10 provides a ligand contact to 1-deoxy-D-xylulose 5-phosphate; that stretch reads DH. 3-amino-2-oxopropyl phosphate is bound at residue Arg-18. His-43 (proton acceptor) is an active-site residue. Positions 45 and 50 each coordinate 1-deoxy-D-xylulose 5-phosphate. The Proton acceptor role is filled by Glu-70. Thr-100 is a 1-deoxy-D-xylulose 5-phosphate binding site. The active-site Proton donor is His-190. Residues Gly-191 and 212–213 contribute to the 3-amino-2-oxopropyl phosphate site; that span reads GH.

The protein belongs to the PNP synthase family. Homooctamer; tetramer of dimers.

Its subcellular location is the cytoplasm. It catalyses the reaction 3-amino-2-oxopropyl phosphate + 1-deoxy-D-xylulose 5-phosphate = pyridoxine 5'-phosphate + phosphate + 2 H2O + H(+). Its pathway is cofactor biosynthesis; pyridoxine 5'-phosphate biosynthesis; pyridoxine 5'-phosphate from D-erythrose 4-phosphate: step 5/5. Catalyzes the complicated ring closure reaction between the two acyclic compounds 1-deoxy-D-xylulose-5-phosphate (DXP) and 3-amino-2-oxopropyl phosphate (1-amino-acetone-3-phosphate or AAP) to form pyridoxine 5'-phosphate (PNP) and inorganic phosphate. In Prochlorococcus marinus (strain MIT 9211), this protein is Pyridoxine 5'-phosphate synthase.